The sequence spans 443 residues: Xaa-Pro dipeptidase (443 aa).

Mn(2+)-binding residues include D246, D257, H339, E384, and E423.

The protein belongs to the peptidase M24B family. Bacterial-type prolidase subfamily. The cofactor is Mn(2+).

The enzyme catalyses Xaa-L-Pro dipeptide + H2O = an L-alpha-amino acid + L-proline. Splits dipeptides with a prolyl residue in the C-terminal position. In Salmonella paratyphi B (strain ATCC BAA-1250 / SPB7), this protein is Xaa-Pro dipeptidase.